The primary structure comprises 343 residues: MTTPLLLRAARGESVERPPIWLMRQAGRYMKVYRDLRDRYPSFRQRSEIPELAIEISLQPFRAFAPDGVILFSDILTPLPGIGIPFDIVESKGPIIDPPIRTLEQVQHLHPLEPEAACPFIRPILATLRQEVGDRAAVLGFAGAPWTLAAYAIEGKSSKDYIQIKTMAYREPDLLHKFLNHLATAIADYLCYQIDCGAQVVQLFDSWAGQLSRQDYDTFAFPYQKQVIQQVKAVYPDVPIILYINGSAAIVDRMAATGVDIVSLDWTVDLGTIRQQFPPSVGLQGNLDPVILFAPQPVLKERSLAIIEAGRKGKYIFNLGHGVLQGTPEENVAFLFDWVKSLA.

Substrate contacts are provided by residues 24–28, Phe43, Asp74, Tyr151, Ser206, and His321; that span reads RQAGR.

This sequence belongs to the uroporphyrinogen decarboxylase family. In terms of assembly, homodimer.

It localises to the cytoplasm. The catalysed reaction is uroporphyrinogen III + 4 H(+) = coproporphyrinogen III + 4 CO2. It participates in porphyrin-containing compound metabolism; protoporphyrin-IX biosynthesis; coproporphyrinogen-III from 5-aminolevulinate: step 4/4. Functionally, catalyzes the decarboxylation of four acetate groups of uroporphyrinogen-III to yield coproporphyrinogen-III. The protein is Uroporphyrinogen decarboxylase of Thermosynechococcus vestitus (strain NIES-2133 / IAM M-273 / BP-1).